The sequence spans 339 residues: Intelectin-1 (339 aa).

The N-terminal stretch at 1–18 (MLSYSLLLLALAFPAGHA) is a signal peptide. The Fibrinogen C-terminal domain maps to 58 to 108 (GDMNYGYRSCNEIKSSDSRAPDGIYTLATEDGESYQTFCDMTTNGGGWTLV). A disulfide bridge links Cys-67 with Cys-96. Ca(2+) is bound by residues His-112, Glu-113, Asn-115, Gly-118, Gly-123, Asp-124, and Asp-159. Disulfide bonds link Cys-120/Cys-306, Cys-225/Cys-285, and Cys-277/Cys-291. N-linked (GlcNAc...) asparagine glycosylation is present at Asn-189. Ca(2+) contacts are provided by Asn-286, Glu-288, Glu-300, and Asp-308. A carbohydrate is bound by residues 288–289 (EH) and Glu-300.

As to quaternary structure, homotrimer; disulfide-linked. Homohexamer; disulfide-linked. Forms primarily homotrimers in solution, but can also form homohexamers. N-glycosylated.

It is found in the secreted. The protein resides in the cytoplasmic vesicle. The protein localises to the secretory vesicle. Its function is as follows. Lectin that specifically recognizes microbial carbohydrate chains in a calcium-dependent manner. Binds to microbial glycans that contain a terminal acyclic 1,2-diol moiety, including beta-linked D-galactofuranose (beta-Galf) and D-phosphoglycerol-modified glycans. Binds to S.pneumoniae serotypes with glycans that contain beta-linked D-galactofuranose (beta-Galf) and with D-phosphoglycerol-modified glycans. Can bind a variety of monosaccharides (in vitro). Probably plays a role in the defense system against microorganisms. The chain is Intelectin-1 (itln1) from Xenopus laevis (African clawed frog).